Consider the following 292-residue polypeptide: Ribosomal RNA small subunit methyltransferase A (292 aa).

S-adenosyl-L-methionine contacts are provided by asparagine 28, leucine 30, glycine 55, glutamate 77, aspartate 103, and asparagine 123.

The protein belongs to the class I-like SAM-binding methyltransferase superfamily. rRNA adenine N(6)-methyltransferase family. RsmA subfamily.

Its subcellular location is the cytoplasm. The catalysed reaction is adenosine(1518)/adenosine(1519) in 16S rRNA + 4 S-adenosyl-L-methionine = N(6)-dimethyladenosine(1518)/N(6)-dimethyladenosine(1519) in 16S rRNA + 4 S-adenosyl-L-homocysteine + 4 H(+). In terms of biological role, specifically dimethylates two adjacent adenosines (A1518 and A1519) in the loop of a conserved hairpin near the 3'-end of 16S rRNA in the 30S particle. May play a critical role in biogenesis of 30S subunits. The polypeptide is Ribosomal RNA small subunit methyltransferase A (Methylobacterium radiotolerans (strain ATCC 27329 / DSM 1819 / JCM 2831 / NBRC 15690 / NCIMB 10815 / 0-1)).